The following is a 637-amino-acid chain: Threonine--tRNA ligase (637 aa).

The TGS domain occupies 1–61; that stretch reads MLNITLPDGS…TEDSSVQIIT (61 aa). The catalytic stretch occupies residues 242–533; it reads DHRKLGKQLD…LIENHAGSFP (292 aa). The Zn(2+) site is built by Cys-333, His-384, and His-510.

This sequence belongs to the class-II aminoacyl-tRNA synthetase family. In terms of assembly, homodimer. Zn(2+) is required as a cofactor.

It is found in the cytoplasm. The enzyme catalyses tRNA(Thr) + L-threonine + ATP = L-threonyl-tRNA(Thr) + AMP + diphosphate + H(+). Its function is as follows. Catalyzes the attachment of threonine to tRNA(Thr) in a two-step reaction: L-threonine is first activated by ATP to form Thr-AMP and then transferred to the acceptor end of tRNA(Thr). Also edits incorrectly charged L-seryl-tRNA(Thr). The chain is Threonine--tRNA ligase from Neisseria meningitidis serogroup C (strain 053442).